Reading from the N-terminus, the 587-residue chain is Phosphatidate phosphatase APP1 (587 aa).

Disordered regions lie at residues 1–28 (MNSQ…RMGK) and 150–178 (PPHL…SENR). 2 stretches are compositionally biased toward low complexity: residues 9 to 22 (SSSS…PTSG) and 163 to 174 (SQSSIESSLSSK). The DXDXT motif motif lies at 281–285 (DIDDT). The disordered stretch occupies residues 452-521 (QQRPMQMTKS…NRQLPNLDAN (70 aa)). Residues 467–483 (RRPPPPPIPSTQKPSLT) are interaction with SH3 domain of ABP1.

As to quaternary structure, monomer. Interacts with ABP1. Requires Mg(2+) as cofactor. In terms of processing, N-glycosylated.

It is found in the cytoplasm. Its subcellular location is the cytoskeleton. The protein resides in the actin patch. The catalysed reaction is a 1,2-diacyl-sn-glycero-3-phosphate + H2O = a 1,2-diacyl-sn-glycerol + phosphate. The enzyme catalyses 1,2-di-(9Z-octadecenoyl)-sn-glycero-3-phosphate + H2O = 1,2-di-(9Z-octadecenoyl)-sn-glycerol + phosphate. Inhibited by N-ethylmaleimide. Functionally, mg(2+)-dependent phosphatidate (PA) phosphatase which catalyzes the dephosphorylation of PA to yield diacylglycerol. May play a role in vesicular trafficking through its PAP activity at cortical actin patches. Can also utilize diacylglycerol pyrophosphate and lyso-PA as substrates with specificity constants 4- and 7-fold lower, respectively, when compared with PA. In Saccharomyces cerevisiae (strain ATCC 204508 / S288c) (Baker's yeast), this protein is Phosphatidate phosphatase APP1 (APP1).